The chain runs to 77 residues: Sec-independent protein translocase protein TatA (77 aa).

Residues 2–22 (GFGGISIWQLLIILLIVVMLF) traverse the membrane as a helical segment. Basic and acidic residues-rich tracts occupy residues 46–59 (DNGEAEKPAVEEPK) and 66–77 (QARKVEEPAKKD). Residues 46-77 (DNGEAEKPAVEEPKGQTIDAQARKVEEPAKKD) form a disordered region.

Belongs to the TatA/E family. The Tat system comprises two distinct complexes: a TatABC complex, containing multiple copies of TatA, TatB and TatC subunits, and a separate TatA complex, containing only TatA subunits. Substrates initially bind to the TatABC complex, which probably triggers association of the separate TatA complex to form the active translocon.

The protein localises to the cell inner membrane. In terms of biological role, part of the twin-arginine translocation (Tat) system that transports large folded proteins containing a characteristic twin-arginine motif in their signal peptide across membranes. TatA could form the protein-conducting channel of the Tat system. The sequence is that of Sec-independent protein translocase protein TatA from Ectopseudomonas mendocina (strain ymp) (Pseudomonas mendocina).